We begin with the raw amino-acid sequence, 210 residues long: Dynactin-associated protein (210 aa).

Residues 1–113 lie on the Cytoplasmic side of the membrane; that stretch reads MVADIKGNEQ…YCRNDWSMWK (113 aa). Residues 114 to 134 traverse the membrane as a helical; Signal-anchor for type II membrane protein segment; it reads VFLACLLACVIMTAIGVLIIC. Residues 135–210 lie on the Extracellular side of the membrane; it reads LVNNKGSANS…PITVAPTDHL (76 aa). Residues 168–210 are disordered; sequence ACPPTMTTTSTVPASTATESTTSTATAATTSTEPITVAPTDHL. Over residues 171 to 203 the composition is skewed to low complexity; the sequence is PTMTTTSTVPASTATESTTSTATAATTSTEPIT.

As to quaternary structure, interacts with DCTN1 and DCTN2. In terms of tissue distribution, expressed in fibroblast and numerous cancer cell lines (at protein level).

It localises to the golgi apparatus membrane. The protein resides in the cell membrane. Its function is as follows. Plays a role in the regulation of cell proliferation. Promotes activation of the AKT1 signaling pathway. Promotes phosphorylation of AKT1 at 'Ser-473'. The polypeptide is Dynactin-associated protein (DYNAP) (Homo sapiens (Human)).